We begin with the raw amino-acid sequence, 453 residues long: Ribosomal protein uS12 methylthiotransferase RimO (453 aa).

The MTTase N-terminal domain occupies 9-124; the sequence is PKVGFVSLGC…VMEAVHTHLP (116 aa). [4Fe-4S] cluster-binding residues include C18, C54, C83, C155, C159, and C162. Residues 141-382 enclose the Radical SAM core domain; it reads LTPKHYAYLK…MEVAERVSAR (242 aa). A TRAM domain is found at 385–453; it reads QRKVGKSLRV…ADGHDLWGEV (69 aa).

This sequence belongs to the methylthiotransferase family. RimO subfamily. The cofactor is [4Fe-4S] cluster.

It is found in the cytoplasm. The enzyme catalyses L-aspartate(89)-[ribosomal protein uS12]-hydrogen + (sulfur carrier)-SH + AH2 + 2 S-adenosyl-L-methionine = 3-methylsulfanyl-L-aspartate(89)-[ribosomal protein uS12]-hydrogen + (sulfur carrier)-H + 5'-deoxyadenosine + L-methionine + A + S-adenosyl-L-homocysteine + 2 H(+). Catalyzes the methylthiolation of an aspartic acid residue of ribosomal protein uS12. This Ralstonia pickettii (strain 12J) protein is Ribosomal protein uS12 methylthiotransferase RimO.